A 394-amino-acid chain; its full sequence is NAD(P)H-quinone oxidoreductase subunit H (394 aa).

The protein belongs to the complex I 49 kDa subunit family. In terms of assembly, NDH-1 can be composed of about 15 different subunits; different subcomplexes with different compositions have been identified which probably have different functions.

Its subcellular location is the cellular thylakoid membrane. It catalyses the reaction a plastoquinone + NADH + (n+1) H(+)(in) = a plastoquinol + NAD(+) + n H(+)(out). It carries out the reaction a plastoquinone + NADPH + (n+1) H(+)(in) = a plastoquinol + NADP(+) + n H(+)(out). In terms of biological role, NDH-1 shuttles electrons from an unknown electron donor, via FMN and iron-sulfur (Fe-S) centers, to quinones in the respiratory and/or the photosynthetic chain. The immediate electron acceptor for the enzyme in this species is believed to be plastoquinone. Couples the redox reaction to proton translocation, and thus conserves the redox energy in a proton gradient. Cyanobacterial NDH-1 also plays a role in inorganic carbon-concentration. This is NAD(P)H-quinone oxidoreductase subunit H from Synechococcus sp. (strain ATCC 27144 / PCC 6301 / SAUG 1402/1) (Anacystis nidulans).